The primary structure comprises 321 residues: tRNA uridine(34) hydroxylase (321 aa).

A Rhodanese domain is found at 135–233 (DDPLTLVIDT…YLEEVPENES (99 aa)). The active-site Cysteine persulfide intermediate is Cys-193.

Belongs to the TrhO family.

The enzyme catalyses uridine(34) in tRNA + AH2 + O2 = 5-hydroxyuridine(34) in tRNA + A + H2O. In terms of biological role, catalyzes oxygen-dependent 5-hydroxyuridine (ho5U) modification at position 34 in tRNAs. The protein is tRNA uridine(34) hydroxylase of Prochlorococcus marinus (strain SARG / CCMP1375 / SS120).